The following is a 429-amino-acid chain: Adenylosuccinate synthetase (429 aa).

Residues 13-19 (GDEGKGK) and 41-43 (GHT) contribute to the GTP site. The Proton acceptor role is filled by D14. Mg(2+) contacts are provided by D14 and G41. IMP contacts are provided by residues 14–17 (DEGK), 39–42 (NAGH), T130, R144, Q224, T239, and R303. Residue H42 is the Proton donor of the active site. 299–305 (ATTGRAR) serves as a coordination point for substrate. Residues R305, 331 to 333 (KLD), and 412 to 414 (STG) contribute to the GTP site.

It belongs to the adenylosuccinate synthetase family. As to quaternary structure, homodimer. It depends on Mg(2+) as a cofactor.

The protein resides in the cytoplasm. The catalysed reaction is IMP + L-aspartate + GTP = N(6)-(1,2-dicarboxyethyl)-AMP + GDP + phosphate + 2 H(+). It participates in purine metabolism; AMP biosynthesis via de novo pathway; AMP from IMP: step 1/2. Plays an important role in the de novo pathway of purine nucleotide biosynthesis. Catalyzes the first committed step in the biosynthesis of AMP from IMP. The protein is Adenylosuccinate synthetase of Psychrobacter arcticus (strain DSM 17307 / VKM B-2377 / 273-4).